Reading from the N-terminus, the 484-residue chain is UDP-N-acetylmuramate--L-alanine ligase (484 aa).

An ATP-binding site is contributed by 126 to 132; sequence GTHGKTT.

The protein belongs to the MurCDEF family.

The protein localises to the cytoplasm. It carries out the reaction UDP-N-acetyl-alpha-D-muramate + L-alanine + ATP = UDP-N-acetyl-alpha-D-muramoyl-L-alanine + ADP + phosphate + H(+). Its pathway is cell wall biogenesis; peptidoglycan biosynthesis. Functionally, cell wall formation. The chain is UDP-N-acetylmuramate--L-alanine ligase from Aeromonas hydrophila subsp. hydrophila (strain ATCC 7966 / DSM 30187 / BCRC 13018 / CCUG 14551 / JCM 1027 / KCTC 2358 / NCIMB 9240 / NCTC 8049).